Here is a 485-residue protein sequence, read N- to C-terminus: Cyclic GMP-AMP synthase-like receptor (485 aa).

ATP-binding positions include Ser70 and 82–84 (EYD). Positions 82, 84, and 204 each coordinate Mg(2+). Residues Asp204 and 247–254 (RLSFYEQE) contribute to the GTP site. 2 residues coordinate ATP: Lys271 and Lys274. Mn(2+)-binding residues include Ile298 and Asp304.

It belongs to the mab-21 family. Requires Mg(2+) as cofactor. The cofactor is Mn(2+).

The enzyme catalyses GTP + ATP = 2',3'-cGAMP + 2 diphosphate. It catalyses the reaction GTP + ATP = pppGp(2'-5')A + diphosphate. The catalysed reaction is pppGp(2'-5')A = 2',3'-cGAMP + diphosphate. Its function is as follows. Nucleotidyltransferase that catalyzes the formation of cyclic GMP-AMP (2',3'-cGAMP) from ATP and GTP and plays a key role in innate immunity. Directly binds some unknown ligand, activating the nucleotidyltransferase activity, leading to synthesis of 2',3'-cGAMP, a second messenger that binds to and activates Sting, thereby triggering the immune response via activation of the NF-kappa-B transcription factor. This chain is Cyclic GMP-AMP synthase-like receptor, found in Trichogramma pretiosum (Parasitoid wasp).